We begin with the raw amino-acid sequence, 194 residues long: MARVGELERKTGETFVRVRLEVDGEGRADVSTGVGFLDHLLHLLAHHSGMDLEVRAEGDTWVDDHHTVEDTGLVLGRALDQALGDRSDLVRFADASVPLIEALSTAAVDLGGRSHLTCNTGPLPEKIGTFDTELFPEFLRAFTQYGRFTLHLNCHYGHNAHHKVESGVKALAVALRAAVSRRSSGTASTKGVVD.

It belongs to the imidazoleglycerol-phosphate dehydratase family.

The protein resides in the cytoplasm. The enzyme catalyses D-erythro-1-(imidazol-4-yl)glycerol 3-phosphate = 3-(imidazol-4-yl)-2-oxopropyl phosphate + H2O. It participates in amino-acid biosynthesis; L-histidine biosynthesis; L-histidine from 5-phospho-alpha-D-ribose 1-diphosphate: step 6/9. This is Imidazoleglycerol-phosphate dehydratase from Rubrobacter xylanophilus (strain DSM 9941 / JCM 11954 / NBRC 16129 / PRD-1).